Here is a 617-residue protein sequence, read N- to C-terminus: 1-deoxy-D-xylulose-5-phosphate synthase (617 aa).

Thiamine diphosphate-binding positions include His-76 and 117 to 119 (GHS). Asp-148 contributes to the Mg(2+) binding site. Thiamine diphosphate contacts are provided by residues 149–150 (GA), Asn-177, Tyr-285, and Glu-366. Asn-177 provides a ligand contact to Mg(2+).

Belongs to the transketolase family. DXPS subfamily. Homodimer. Requires Mg(2+) as cofactor. It depends on thiamine diphosphate as a cofactor.

The enzyme catalyses D-glyceraldehyde 3-phosphate + pyruvate + H(+) = 1-deoxy-D-xylulose 5-phosphate + CO2. It participates in metabolic intermediate biosynthesis; 1-deoxy-D-xylulose 5-phosphate biosynthesis; 1-deoxy-D-xylulose 5-phosphate from D-glyceraldehyde 3-phosphate and pyruvate: step 1/1. Its function is as follows. Catalyzes the acyloin condensation reaction between C atoms 2 and 3 of pyruvate and glyceraldehyde 3-phosphate to yield 1-deoxy-D-xylulose-5-phosphate (DXP). This is 1-deoxy-D-xylulose-5-phosphate synthase from Mannheimia succiniciproducens (strain KCTC 0769BP / MBEL55E).